Consider the following 344-residue polypeptide: Methionine import ATP-binding protein MetN 1 (344 aa).

The ABC transporter domain occupies 2–241 (IELRNLSQRF…PHHEVTRALI (240 aa)). 38 to 45 (GRSGAGKS) contacts ATP.

This sequence belongs to the ABC transporter superfamily. Methionine importer (TC 3.A.1.24) family. In terms of assembly, the complex is composed of two ATP-binding proteins (MetN), two transmembrane proteins (MetI) and a solute-binding protein (MetQ).

Its subcellular location is the cell inner membrane. The enzyme catalyses L-methionine(out) + ATP + H2O = L-methionine(in) + ADP + phosphate + H(+). The catalysed reaction is D-methionine(out) + ATP + H2O = D-methionine(in) + ADP + phosphate + H(+). Part of the ABC transporter complex MetNIQ involved in methionine import. Responsible for energy coupling to the transport system. The polypeptide is Methionine import ATP-binding protein MetN 1 (Burkholderia ambifaria (strain ATCC BAA-244 / DSM 16087 / CCUG 44356 / LMG 19182 / AMMD) (Burkholderia cepacia (strain AMMD))).